The primary structure comprises 41 residues: Tachystatin-C (41 aa).

Intrachain disulfides connect cysteine 12–cysteine 28, cysteine 19–cysteine 33, and cysteine 27–cysteine 38.

As to expression, granular hemocytes, small secretory granules.

It localises to the secreted. In terms of biological role, binds to chitin. Shows strong activity against E.coli (IC(50) is 1.2 ug/ml). Is also very active against S.aureus (IC(50) is 0.8 ug/ml), C.albicans (IC(50) is 0.9 ug/ml) and P.pastoris (IC(50) is 0.3 ug/ml). Binds to chitin (5.2 uM are required to obtain 50% of binding). Causes hemolysis on sheep erythrocytes, probably by forming ion-permeable pores. This chain is Tachystatin-C, found in Tachypleus tridentatus (Japanese horseshoe crab).